Reading from the N-terminus, the 446-residue chain is Amino-acid acetyltransferase (446 aa).

Positions 299 to 431 (EQVRDAEIDD…SHLPMKKQKL (133 aa)) constitute an N-acetyltransferase domain.

It belongs to the acetyltransferase family. ArgA subfamily.

Its subcellular location is the cytoplasm. It carries out the reaction L-glutamate + acetyl-CoA = N-acetyl-L-glutamate + CoA + H(+). It functions in the pathway amino-acid biosynthesis; L-arginine biosynthesis; N(2)-acetyl-L-ornithine from L-glutamate: step 1/4. The polypeptide is Amino-acid acetyltransferase (Aliivibrio fischeri (strain MJ11) (Vibrio fischeri)).